A 300-amino-acid polypeptide reads, in one-letter code: F-box protein PP2-A15 (300 aa).

The 47-residue stretch at 17-63 (MGPGLGDIPESCVACVFMYLTPPEICNLAGLNRSFRGAASSDSVWEK) folds into the F-box domain.

This Arabidopsis thaliana (Mouse-ear cress) protein is F-box protein PP2-A15 (PP2A15).